We begin with the raw amino-acid sequence, 192 residues long: Probable thymidylate kinase (192 aa).

ATP is bound at residue 7–14 (GIDGAGKS).

It belongs to the thymidylate kinase family.

It carries out the reaction dTMP + ATP = dTDP + ADP. In Methanobrevibacter smithii (strain ATCC 35061 / DSM 861 / OCM 144 / PS), this protein is Probable thymidylate kinase.